We begin with the raw amino-acid sequence, 305 residues long: N-acetylneuraminate lyase 2 (305 aa).

The aceneuramate site is built by serine 47 and threonine 48. Tyrosine 137 serves as the catalytic Proton donor. The active-site Schiff-base intermediate with substrate is lysine 165. The aceneuramate site is built by threonine 167, glycine 189, aspartate 191, glutamate 192, and serine 208.

It belongs to the DapA family. NanA subfamily. In terms of assembly, homotetramer.

It localises to the cytoplasm. The enzyme catalyses aceneuramate = aldehydo-N-acetyl-D-mannosamine + pyruvate. Its pathway is amino-sugar metabolism; N-acetylneuraminate degradation; D-fructose 6-phosphate from N-acetylneuraminate: step 1/5. Its function is as follows. Catalyzes the reversible aldol cleavage of N-acetylneuraminic acid (sialic acid; Neu5Ac) to form pyruvate and N-acetylmannosamine (ManNAc) via a Schiff base intermediate. In Escherichia coli O6:H1 (strain CFT073 / ATCC 700928 / UPEC), this protein is N-acetylneuraminate lyase 2.